Reading from the N-terminus, the 141-residue chain is Hemoglobin subunit alpha-A (141 aa).

A Globin domain is found at 1 to 141; sequence VLTEEDKSRV…VAKTLVSRYR (141 aa). O2 is bound at residue H58. H87 is a heme b binding site.

This sequence belongs to the globin family. Heterotetramer of two alpha chains and two beta chains. As to expression, red blood cells.

Involved in oxygen transport from the lung to the various peripheral tissues. The polypeptide is Hemoglobin subunit alpha-A (Drymarchon melanurus erebennus (Texas indigo snake)).